The chain runs to 66 residues: Large ribosomal subunit protein bL35 (66 aa).

Positions Met1–His26 are enriched in basic residues. Positions Met1 to Thr29 are disordered.

It belongs to the bacterial ribosomal protein bL35 family.

This chain is Large ribosomal subunit protein bL35, found in Geobacillus kaustophilus (strain HTA426).